A 684-amino-acid polypeptide reads, in one-letter code: UvrABC system protein B (684 aa).

In terms of domain architecture, Helicase ATP-binding spans 32–420; the sequence is DGVLRGDRWQ…GGVVVEQLIR (389 aa). 45-52 contacts ATP; the sequence is GVTGSGKT. The Beta-hairpin motif lies at 98 to 121; it reads YYDFYQPEAYIPSLDKYIAKDLKI. Residues 437–603 enclose the Helicase C-terminal domain; that stretch reads QIDHLLARIR…SIIKSVDQVL (167 aa). In terms of domain architecture, UVR spans 643–678; the sequence is MLMVAEMNAEMQKAAEQTDYEKAAYLRDEILMLQER.

This sequence belongs to the UvrB family. As to quaternary structure, forms a heterotetramer with UvrA during the search for lesions. Interacts with UvrC in an incision complex.

Its subcellular location is the cytoplasm. In terms of biological role, the UvrABC repair system catalyzes the recognition and processing of DNA lesions. A damage recognition complex composed of 2 UvrA and 2 UvrB subunits scans DNA for abnormalities. Upon binding of the UvrA(2)B(2) complex to a putative damaged site, the DNA wraps around one UvrB monomer. DNA wrap is dependent on ATP binding by UvrB and probably causes local melting of the DNA helix, facilitating insertion of UvrB beta-hairpin between the DNA strands. Then UvrB probes one DNA strand for the presence of a lesion. If a lesion is found the UvrA subunits dissociate and the UvrB-DNA preincision complex is formed. This complex is subsequently bound by UvrC and the second UvrB is released. If no lesion is found, the DNA wraps around the other UvrB subunit that will check the other stand for damage. The protein is UvrABC system protein B of Chlorobaculum tepidum (strain ATCC 49652 / DSM 12025 / NBRC 103806 / TLS) (Chlorobium tepidum).